Consider the following 607-residue polypeptide: Developmental gene 1062 protein (607 aa).

3 disordered regions span residues 62-84 (LQGQ…HNNQ), 334-451 (ICDD…SNFQ), and 568-602 (DNNT…NDLL). The span at 334–363 (ICDDSSNSSTPSLSSYSNGNNKYNNNNNDS) shows a compositional bias: low complexity. The segment covering 364–382 (SESDESDDDDNNDDDDNDS) has biased composition (acidic residues). Low complexity-rich tracts occupy residues 383 to 451 (IDFN…SNFQ) and 568 to 582 (DNNT…ISVN).

The polypeptide is Developmental gene 1062 protein (DG1062) (Dictyostelium discoideum (Social amoeba)).